The following is a 218-amino-acid chain: 3,4-dihydroxy-2-butanone 4-phosphate synthase (218 aa).

D-ribulose 5-phosphate contacts are provided by residues 37-38 (RE), aspartate 42, 150-154 (RSGHT), and glutamate 174. Glutamate 38 is a Mg(2+) binding site. Histidine 153 lines the Mg(2+) pocket.

This sequence belongs to the DHBP synthase family. Homodimer. Mg(2+) is required as a cofactor. Requires Mn(2+) as cofactor.

The enzyme catalyses D-ribulose 5-phosphate = (2S)-2-hydroxy-3-oxobutyl phosphate + formate + H(+). The protein operates within cofactor biosynthesis; riboflavin biosynthesis; 2-hydroxy-3-oxobutyl phosphate from D-ribulose 5-phosphate: step 1/1. Functionally, catalyzes the conversion of D-ribulose 5-phosphate to formate and 3,4-dihydroxy-2-butanone 4-phosphate. The sequence is that of 3,4-dihydroxy-2-butanone 4-phosphate synthase from Hamiltonella defensa subsp. Acyrthosiphon pisum (strain 5AT).